The primary structure comprises 98 residues: Toxin ParE1 (98 aa).

The protein belongs to the RelE toxin family.

Functionally, toxic component of a type II toxin-antitoxin (TA) system. Its toxic effect is neutralized by coexpression with cognate antitoxin ParD1. The protein is Toxin ParE1 (parE1) of Mycobacterium tuberculosis (strain CDC 1551 / Oshkosh).